The sequence spans 346 residues: S-adenosylmethionine:tRNA ribosyltransferase-isomerase (346 aa).

It belongs to the QueA family. Monomer.

Its subcellular location is the cytoplasm. The enzyme catalyses 7-aminomethyl-7-carbaguanosine(34) in tRNA + S-adenosyl-L-methionine = epoxyqueuosine(34) in tRNA + adenine + L-methionine + 2 H(+). The protein operates within tRNA modification; tRNA-queuosine biosynthesis. Its function is as follows. Transfers and isomerizes the ribose moiety from AdoMet to the 7-aminomethyl group of 7-deazaguanine (preQ1-tRNA) to give epoxyqueuosine (oQ-tRNA). The sequence is that of S-adenosylmethionine:tRNA ribosyltransferase-isomerase from Cereibacter sphaeroides (strain KD131 / KCTC 12085) (Rhodobacter sphaeroides).